A 353-amino-acid polypeptide reads, in one-letter code: MTIAFGRFIKEENDLFDIMDDWLRRDRFVFVGWSGLLLFPCAYFALGGWFTGTTFVTSWYTHGLASSYLEGCNFLTAAVSTPANSLAHSLLLLWGPEAQGDFTRWCQLGGLWTFVALHGAFGLIGFMLRQFELARSVQLRPYNAIAFSAPIAVFVSVFLIYPLGQSGWFFAPSFGVAAIFRFILFFQGFHNWTLNPFHMMGVAGVLGAALLCAIHGATVENTLFEDGDGANTFRAFNPTQAEETYSMVTANRFWSQIFGVAFSNKRWLHFFMLFVPVTGLWMSAIGVVGLALNLRAYDFVSQEIRAAEDPEFETFYTKNILLNEGIRAWMAAQDQPHENLIFPEEVLPRGNAL.

At T2 the chain carries N-acetylthreonine. T2 is subject to Phosphothreonine. The chain crosses the membrane as a helical span at residues 41–61 (CAYFALGGWFTGTTFVTSWYT). Residue H118 participates in chlorophyll a binding. A helical membrane pass occupies residues 125 to 141 (GFMLRQFELARSVQLRP). Q130 and N143 together coordinate pheophytin a. The chain crosses the membrane as a helical span at residues 153 to 166 (VFVSVFLIYPLGQS). Position 198 (H198) interacts with chlorophyll a. The chain crosses the membrane as a helical span at residues 208 to 228 (AALLCAIHGATVENTLFEDGD). A plastoquinone-binding residues include H215 and F262. H215 serves as a coordination point for Fe cation. Residue H269 coordinates Fe cation. The helical transmembrane segment at 279 to 295 (GLWMSAIGVVGLALNLR) threads the bilayer.

This sequence belongs to the reaction center PufL/M/PsbA/D family. PSII is composed of 1 copy each of membrane proteins PsbA, PsbB, PsbC, PsbD, PsbE, PsbF, PsbH, PsbI, PsbJ, PsbK, PsbL, PsbM, PsbT, PsbX, PsbY, PsbZ, Psb30/Ycf12, at least 3 peripheral proteins of the oxygen-evolving complex and a large number of cofactors. It forms dimeric complexes. Requires The D1/D2 heterodimer binds P680, chlorophylls that are the primary electron donor of PSII, and subsequent electron acceptors. It shares a non-heme iron and each subunit binds pheophytin, quinone, additional chlorophylls, carotenoids and lipids. There is also a Cl(-1) ion associated with D1 and D2, which is required for oxygen evolution. The PSII complex binds additional chlorophylls, carotenoids and specific lipids. as cofactor.

The protein resides in the plastid. It is found in the chloroplast thylakoid membrane. It catalyses the reaction 2 a plastoquinone + 4 hnu + 2 H2O = 2 a plastoquinol + O2. In terms of biological role, photosystem II (PSII) is a light-driven water:plastoquinone oxidoreductase that uses light energy to abstract electrons from H(2)O, generating O(2) and a proton gradient subsequently used for ATP formation. It consists of a core antenna complex that captures photons, and an electron transfer chain that converts photonic excitation into a charge separation. The D1/D2 (PsbA/PsbD) reaction center heterodimer binds P680, the primary electron donor of PSII as well as several subsequent electron acceptors. D2 is needed for assembly of a stable PSII complex. The chain is Photosystem II D2 protein from Phalaenopsis aphrodite subsp. formosana (Moth orchid).